The sequence spans 951 residues: MELPKETIEQLQNLFIAANRPEKEIREEATSKIQKFVKETPNSIITLLVFQNLKTIDAGARTLSAITFKNLVKDSWVDGDEVENPIPSNDKEMVKSLLLNFILSAVNNTTQSQLVESLSMIGVSDFPQQWPSILPELIKQMESNTDIPTLSIILRVLHSLLKKYRGQERNNQSLSELKYILSILPTPYLSLLIKTGVAVDANLQNEQQLVLLLNCVHFLLEIFFSMSSVDLPEFFEDNLASFTNEFHRYLKFNTNFQSIILSSNDEEPSLLKKIQTSICEIINLYTQIYDEEFSSFLQPFVQVVWGLLTQTSKDICNDPFVYASIRFLGTVATSISHKIFESPETLKQICSMIVTPNIELRESDIELYEDNHVEYMRRDIEGSDSDTRRRAAIELVKGLRKYYENQVIQLLSVDINNLLQKYNSNREENWICKDSAIFLVTALAVKSGGSDESSESSKLVNVLDFFKSSIEPELSGATQTNKPILKADCLKFITIFRNQIPAEEYPRILQSVIPCLENPDFIIHTYASTCIDRLLSVKDGGVPRLSAEFISTNLTGLLLPLVGVFNFKDSKQNERAMRTIVRIVLMTQGKVSQQITIQLLQKFVSIIIEEAKNPSNHSFNHYCFEVVGTLLKGFSSEPEVTQIIMPLIEMVLQTNNAEFSPYCFQLLSILVENCRPEYLDLFRPILPIIFNDMTWARDADYPALVRLLQAFIKKEGSSIAPHLSAILGITEKLIMRVTHDHEAFLILETVVETLDIQFLEKYLGGIFSMILTRITKKKTLKVVRCFTIFFSIFMIKYGVVKTAQTVRAIKDSLWEDILIKLWLPTVEDINGSIEKKIISISLTNMICCNDILATPELWIKLIQCQSNVISGKKSQETEQAGAASDLYIDQAEANEGYVPTFTQLQFSKKVDVDPFPTISNPKEYFISTFQTFKSQNEMLVTPLLSTANIQL.

In terms of domain architecture, Importin N-terminal spans 29–104 (ATSKIQKFVK…KSLLLNFILS (76 aa)).

This sequence belongs to the XPO2/CSE1 family.

The protein resides in the cytoplasm. Its subcellular location is the nucleus. Functionally, export receptor for importin alpha. Mediates importin-alpha re-export from the nucleus to the cytoplasm after import substrates have been released into the nucleoplasm. In Dictyostelium discoideum (Social amoeba), this protein is Exportin-2 (xpo2).